We begin with the raw amino-acid sequence, 293 residues long: Diaminopimelate epimerase (293 aa).

Substrate contacts are provided by Asn-11 and Asn-78. Cys-87 serves as the catalytic Proton donor. Substrate contacts are provided by residues Gly-88–Asn-89, Asn-166, Asn-202, and Glu-220–Arg-221. Cys-229 acts as the Proton acceptor in catalysis. Gly-230–Thr-231 contributes to the substrate binding site.

This sequence belongs to the diaminopimelate epimerase family. Homodimer.

Its subcellular location is the cytoplasm. The catalysed reaction is (2S,6S)-2,6-diaminopimelate = meso-2,6-diaminopimelate. The protein operates within amino-acid biosynthesis; L-lysine biosynthesis via DAP pathway; DL-2,6-diaminopimelate from LL-2,6-diaminopimelate: step 1/1. Functionally, catalyzes the stereoinversion of LL-2,6-diaminopimelate (L,L-DAP) to meso-diaminopimelate (meso-DAP), a precursor of L-lysine and an essential component of the bacterial peptidoglycan. In Mycobacterium sp. (strain JLS), this protein is Diaminopimelate epimerase.